The chain runs to 77 residues: UPF0401 protein c0279 (77 aa).

This sequence belongs to the UPF0401 family.

The protein is UPF0401 protein c0279 of Escherichia coli O6:H1 (strain CFT073 / ATCC 700928 / UPEC).